A 1138-amino-acid chain; its full sequence is Mastermind-like protein 3 (1138 aa).

Over residues Pro37–His48 the composition is skewed to polar residues. 6 disordered regions span residues Pro37–Pro68, Glu119–Glu148, Arg169–Thr188, Pro207–Pro237, Glu334–Lys480, and Gln503–Phe547. Residues Gly52–Ser64 show a composition bias toward gly residues. 2 stretches are compositionally biased toward polar residues: residues Gly130–Gln139 and Asn173–Thr188. Polar residues-rich tracts occupy residues Gln343 to Ser359 and Gly372 to Leu394. Low complexity predominate over residues Pro395–Ala411. Residues Ala414 to Thr426 are compositionally biased toward polar residues. A compositionally biased stretch (low complexity) spans Gln467–Lys480. Lys603 is modified (N6-acetyllysine). 5 disordered regions span residues Arg615–His662, His691–Gly721, Leu968–Gln991, Ala1024–Tyr1084, and Gln1090–Pro1109. The span at Gln633–Gln649 shows a compositional bias: low complexity. Residues Pro1064–Tyr1084 show a composition bias toward polar residues.

It belongs to the mastermind family. In terms of assembly, interacts through its N-terminal region with the ankyrin repeat region of the Notch proteins NOTCH1, NOTCH2, NOTCH3 and NOTCH4. Forms a DNA-binding complex with Notch proteins and RBPSUH/RBP-J kappa.

It localises to the nucleus speckle. Functionally, acts as a transcriptional coactivator for NOTCH proteins. Has been shown to amplify NOTCH-induced transcription of HES1. The protein is Mastermind-like protein 3 of Homo sapiens (Human).